Here is a 323-residue protein sequence, read N- to C-terminus: Annexin A3 (323 aa).

Ala-2 bears the N-acetylalanine mark. 4 Annexin repeats span residues 18–89 (FNPS…ALVT), 90–161 (PPAV…ILAN), 173–245 (QLAR…AIVR), and 249–320 (NTPA…KICG). The residue at position 177 (Lys-177) is an N6-acetyllysine. Thr-267 carries the phosphothreonine modification.

Belongs to the annexin family.

Inhibitor of phospholipase A2, also possesses anti-coagulant properties. Also cleaves the cyclic bond of inositol 1,2-cyclic phosphate to form inositol 1-phosphate. The protein is Annexin A3 (ANXA3) of Bos taurus (Bovine).